Reading from the N-terminus, the 269-residue chain is Shikimate dehydrogenase (NADP(+)) (269 aa).

Shikimate is bound by residues 17–19 (SKS) and Thr64. Residue Lys68 is the Proton acceptor of the active site. NADP(+) is bound at residue Asp80. The shikimate site is built by Asn89 and Asp105. NADP(+) is bound by residues 130–134 (GAGGA), 154–159 (NRTRAK), and Met213. Tyr215 is a binding site for shikimate. Gly237 contacts NADP(+).

It belongs to the shikimate dehydrogenase family. In terms of assembly, homodimer.

It catalyses the reaction shikimate + NADP(+) = 3-dehydroshikimate + NADPH + H(+). It functions in the pathway metabolic intermediate biosynthesis; chorismate biosynthesis; chorismate from D-erythrose 4-phosphate and phosphoenolpyruvate: step 4/7. Involved in the biosynthesis of the chorismate, which leads to the biosynthesis of aromatic amino acids. Catalyzes the reversible NADPH linked reduction of 3-dehydroshikimate (DHSA) to yield shikimate (SA). The chain is Shikimate dehydrogenase (NADP(+)) from Neisseria gonorrhoeae (strain ATCC 700825 / FA 1090).